A 1465-amino-acid chain; its full sequence is Vacuolar heme ABC transmembrane exporter abc3 (1465 aa).

The Extracellular segment spans residues 1–8 (MITANKGL). Residues 9–29 (SLVLLIPNLFALVSGGLQYVF) form a helical membrane-spanning segment. Residues 30-42 (DVRRRIFRPHFSQ) lie on the Cytoplasmic side of the membrane. The helical transmembrane segment at 43 to 63 (FWTIWMKFFSIALVIITQIYV) threads the bilayer. The Extracellular portion of the chain corresponds to 64–69 (GYKTKN). The chain crosses the membrane as a helical span at residues 70–90 (IGWNFFSVVTYCFVLFLQFAE). Residues 91-97 (QSTLRVP) lie on the Cytoplasmic side of the membrane. Residues 98–118 (MASLLIFWLLKVVTSLLILLF) form a helical membrane-spanning segment. Over 119–129 (SPYIAITSMAR) the chain is Extracellular. The helical transmembrane segment at 130–150 (LLTLITLFCSLVCFISEVYVP) threads the bilayer. 151-152 (PC) is a binding site for heme. Residues 151 to 235 (PCNRVWYSDD…IYHSKNKRRS (85 aa)) are Cytoplasmic-facing. The helical transmembrane segment at 236-256 (LFLWKLLFFNHWKLVALITIT) threads the bilayer. The 290-residue stretch at 250 to 539 (VALITITKLI…LPTVISSLLE (290 aa)) folds into the ABC transmembrane type-1 1 domain. At 257-291 (KLIQDVLAFVQPTLIQKTILFISSYTSPNPESPSR) the chain is on the extracellular side. A helical transmembrane segment spans residues 292–312 (GFIIAILVLVANFLQTLLLQQ). Residues 313–362 (YNQLIMLLGMRWKTELLASIYRKSLLLSSSARQNRSIGDIINYMAVDTQK) lie on the Cytoplasmic side of the membrane. A helical transmembrane segment spans residues 363–383 (ISDLPIYLFIIVSGPFQIALA). Residues 384 to 394 (LSNLYHLMGYS) lie on the Extracellular side of the membrane. A helical membrane pass occupies residues 395–415 (AFTGVAASVILFPCNIIVANV). Residues 416 to 480 (YKKFQSILMK…KIGFITAIGD (65 aa)) lie on the Cytoplasmic side of the membrane. Residues 481 to 501 (FAWIFTTIIVTTVAFGAFIIF) traverse the membrane as a helical segment. Residues 502-511 (HGKTQALTAD) lie on the Extracellular side of the membrane. A helical membrane pass occupies residues 512–532 (IVFPAVSLFNLLQFPLAMLPT). At 533-899 (VISSLLEASV…VYWMYFKSCS (367 aa)) the chain is on the cytoplasmic side. Residues 575-804 (LEIKSGTFSW…TNSELKQQLS (230 aa)) form the ABC transporter 1 domain. 614–621 (GKVGAGKS) is an ATP binding site. Disordered stretches follow at residues 805–824 (EFND…SYPS) and 840–869 (TYSS…TEDD). A helical transmembrane segment spans residues 900–920 (IGLILLYFFFIISGIMMNVAT). The ABC transmembrane type-1 2 domain maps to 903–1189 (ILLYFFFIIS…IVQQSVDAEN (287 aa)). Residues 921–939 (NVWLKHWSEENGKSSSELN) lie on the Extracellular side of the membrane. The chain crosses the membrane as a helical span at residues 940–960 (PSPYFYLGIYLFFGFLSCAFI). The Cytoplasmic segment spans residues 961–1033 (SSSSLTMTVL…FFFRNSIQVL (73 aa)). The chain crosses the membrane as a helical span at residues 1034 to 1054 (FILGVICYSAPLSLLLIVPLF). The Extracellular portion of the chain corresponds to 1055-1465 (FLYLYNRAYY…YSLAKESGLI (411 aa)). In terms of domain architecture, ABC transporter 2 spans 1226-1460 (VSFNHYSAKY…KDSMFYSLAK (235 aa)). An ATP-binding site is contributed by 1260 to 1267 (GRTGAGKS).

The protein belongs to the ABC transporter superfamily.

The protein localises to the vacuole membrane. Iron-regulated vacuolar transporter that mobilizes stored heme from the vacuole to the cytosol in response to iron deficiency. The chain is Vacuolar heme ABC transmembrane exporter abc3 from Schizosaccharomyces pombe (strain 972 / ATCC 24843) (Fission yeast).